Consider the following 368-residue polypeptide: Histidinol-phosphate aminotransferase (368 aa).

Lys215 carries the post-translational modification N6-(pyridoxal phosphate)lysine.

Belongs to the class-II pyridoxal-phosphate-dependent aminotransferase family. Histidinol-phosphate aminotransferase subfamily. Homodimer. Requires pyridoxal 5'-phosphate as cofactor.

It carries out the reaction L-histidinol phosphate + 2-oxoglutarate = 3-(imidazol-4-yl)-2-oxopropyl phosphate + L-glutamate. It participates in amino-acid biosynthesis; L-histidine biosynthesis; L-histidine from 5-phospho-alpha-D-ribose 1-diphosphate: step 7/9. This is Histidinol-phosphate aminotransferase (hisC) from Buchnera aphidicola subsp. Acyrthosiphon pisum (strain APS) (Acyrthosiphon pisum symbiotic bacterium).